Here is a 319-residue protein sequence, read N- to C-terminus: Methionyl-tRNA formyltransferase (319 aa).

Residue 112-115 participates in (6S)-5,6,7,8-tetrahydrofolate binding; the sequence is SILP.

This sequence belongs to the Fmt family.

It catalyses the reaction L-methionyl-tRNA(fMet) + (6R)-10-formyltetrahydrofolate = N-formyl-L-methionyl-tRNA(fMet) + (6S)-5,6,7,8-tetrahydrofolate + H(+). Functionally, attaches a formyl group to the free amino group of methionyl-tRNA(fMet). The formyl group appears to play a dual role in the initiator identity of N-formylmethionyl-tRNA by promoting its recognition by IF2 and preventing the misappropriation of this tRNA by the elongation apparatus. The polypeptide is Methionyl-tRNA formyltransferase (Shewanella denitrificans (strain OS217 / ATCC BAA-1090 / DSM 15013)).